The chain runs to 630 residues: MKVLLIHSDYLEFEAKQKTKIAEDTDILNGKMEECLTVFMAVEKEDEENPQNVIYNTVDEIIKTAENLKINNVVVYPYAHLSSELSSPKVAKEVLQKIEEELKQKNYSVLRAPFGWYKSFKISCKGHPLSELSRKITTERKEEKGETEAKDRPKNKFYILDGEKGEEGLKELDEKKVKKLKDKGLKSVAMHEMGIKHGGKEKDIEPPHVKFITEKEICDYEPSSDAGHFRWYPKGKLIRDLLQDYVYNMVVENNGMPVETPVMYDLGNKAIKEHADKFGERQYRFKQGNKDLMLRFAACFGQFMMKKDMYILPKHLPLKLYELSTYSFRYEQRGELVGLKRLRGFTMPDMHTVCKDTKQTIEEFENQFWMCLKTGDDLNTPYSTIFRFTEDFFEENKEWFFKVAKEYKEKYGKDVILELIPERKHYWVGKVDMAVIDSFGRPIENPTVQIDVESAKRFNIVVHDGNEKTYPVILHCSPTGSIERVLCGLLEKASLDADAGAPPMLPVWLSPIQARVIPVADAHSEYALSVAKKLRENGIRADFDDREESVGKKIRNAGKDWVPFVIVIGDKEVENNILTTTIREKSTLKKPVKENLTVEELIEKIKEETKGFPYRPLSLPLYCSLQPIFR.

The editing domain stretch occupies residues 1-137; that stretch reads MKVLLIHSDY…PLSELSRKIT (137 aa). The segment at 207–506 is catalytic; sequence PHVKFITEKE…ADAGAPPMLP (300 aa). Residues Cys299, His351, and His475 each contribute to the Zn(2+) site.

It belongs to the class-II aminoacyl-tRNA synthetase family. As to quaternary structure, homodimer. Zn(2+) serves as cofactor.

It is found in the cytoplasm. It carries out the reaction tRNA(Thr) + L-threonine + ATP = L-threonyl-tRNA(Thr) + AMP + diphosphate + H(+). Functionally, catalyzes the attachment of threonine to tRNA(Thr) in a two-step reaction: L-threonine is first activated by ATP to form Thr-AMP and then transferred to the acceptor end of tRNA(Thr). Also edits incorrectly charged L-seryl-tRNA(Thr). This is Threonine--tRNA ligase from Methanococcus aeolicus (strain ATCC BAA-1280 / DSM 17508 / OCM 812 / Nankai-3).